We begin with the raw amino-acid sequence, 482 residues long: MNFNSLRKEITSNNASVKELVNDFFVKIDHKDSKINSYICTTKDNAIAQAEDIDKLIQNNEKLPPLAGMPIAIKDNICTKGVATTCASNMLKNFVAPYESTASSKLWSSGGICLGKTNLDEFAMGSSTETSVFGVTSNPWDINRVPGGSSGGSAASVAAGFCAAAIGSDTGGSIRQPASFCGVVGLKPTYGRVSRWGLVAFASSLDQIGPITNTVSDAAEILHSISGKDPFDSTCLDKPVPNYLTDLNKSIKGLKIGIIKECFEHPGLNPEVKESVLSGVDRFQALGAEIIEVECPRFNDGIATYYVIAPSEASANLARYDGVKYGYRSNEGSNLIDMTSKSRAEGFGDEVQRRILIGTYALSAGYSDAYYKKAQKVRTLIRKDFDNAFKKVDVLLTPTCPTTAFLKGDFVNDPLSMYLSDLLTVPANLAGLPAISIPCGFDTKGLPIGLQLIGNVLEEDRILNAANIFEIDAHVIKKRPLF.

Active-site charge relay system residues include lysine 74 and serine 149. Serine 173 functions as the Acyl-ester intermediate in the catalytic mechanism.

Belongs to the amidase family. GatA subfamily. In terms of assembly, heterotrimer of A, B and C subunits.

It carries out the reaction L-glutamyl-tRNA(Gln) + L-glutamine + ATP + H2O = L-glutaminyl-tRNA(Gln) + L-glutamate + ADP + phosphate + H(+). Functionally, allows the formation of correctly charged Gln-tRNA(Gln) through the transamidation of misacylated Glu-tRNA(Gln) in organisms which lack glutaminyl-tRNA synthetase. The reaction takes place in the presence of glutamine and ATP through an activated gamma-phospho-Glu-tRNA(Gln). This is Glutamyl-tRNA(Gln) amidotransferase subunit A from Prochlorococcus marinus (strain AS9601).